Here is a 215-residue protein sequence, read N- to C-terminus: Thiamine-phosphate synthase 1 (215 aa).

4-amino-2-methyl-5-(diphosphooxymethyl)pyrimidine contacts are provided by residues 35-39 and Asn-67; that span reads QYRFE. Mg(2+)-binding residues include Asp-68 and Asp-87. Thr-106 contacts 4-amino-2-methyl-5-(diphosphooxymethyl)pyrimidine. 132 to 134 is a 2-[(2R,5Z)-2-carboxy-4-methylthiazol-5(2H)-ylidene]ethyl phosphate binding site; that stretch reads TST. Position 135 (Lys-135) interacts with 4-amino-2-methyl-5-(diphosphooxymethyl)pyrimidine. Gly-162 serves as a coordination point for 2-[(2R,5Z)-2-carboxy-4-methylthiazol-5(2H)-ylidene]ethyl phosphate.

The protein belongs to the thiamine-phosphate synthase family. Requires Mg(2+) as cofactor.

The enzyme catalyses 2-[(2R,5Z)-2-carboxy-4-methylthiazol-5(2H)-ylidene]ethyl phosphate + 4-amino-2-methyl-5-(diphosphooxymethyl)pyrimidine + 2 H(+) = thiamine phosphate + CO2 + diphosphate. It carries out the reaction 2-(2-carboxy-4-methylthiazol-5-yl)ethyl phosphate + 4-amino-2-methyl-5-(diphosphooxymethyl)pyrimidine + 2 H(+) = thiamine phosphate + CO2 + diphosphate. It catalyses the reaction 4-methyl-5-(2-phosphooxyethyl)-thiazole + 4-amino-2-methyl-5-(diphosphooxymethyl)pyrimidine + H(+) = thiamine phosphate + diphosphate. The protein operates within cofactor biosynthesis; thiamine diphosphate biosynthesis; thiamine phosphate from 4-amino-2-methyl-5-diphosphomethylpyrimidine and 4-methyl-5-(2-phosphoethyl)-thiazole: step 1/1. Condenses 4-methyl-5-(beta-hydroxyethyl)thiazole monophosphate (THZ-P) and 2-methyl-4-amino-5-hydroxymethyl pyrimidine pyrophosphate (HMP-PP) to form thiamine monophosphate (TMP). In Aquifex aeolicus (strain VF5), this protein is Thiamine-phosphate synthase 1.